The sequence spans 604 residues: Inactive all-trans-retinol 13,14-reductase (604 aa).

An N-terminal signal peptide occupies residues 1–17 (MWWILLFLEWFVDWARG).

This sequence belongs to the carotenoid/retinoid oxidoreductase family. CrtISO subfamily.

The protein is Inactive all-trans-retinol 13,14-reductase (retsatl) of Danio rerio (Zebrafish).